The chain runs to 140 residues: Profilin (140 aa).

The protein belongs to the profilin family. As to quaternary structure, occurs in many kinds of cells as a complex with monomeric actin in a 1:1 ratio.

In terms of biological role, binds to actin and affects the structure of the cytoskeleton. At high concentrations, profilin prevents the polymerization of actin, whereas it enhances it at low concentrations. By binding to PIP2, it inhibits the formation of IP3 and DG. This Suberites domuncula (Sponge) protein is Profilin.